Consider the following 111-residue polypeptide: Colipase (111 aa).

An N-terminal signal peptide occupies residues 1–17; sequence MEKVLALVLLTLAVAYA. Positions 18–22 are cleaved as a propeptide — enterostatin, activation peptide; the sequence is APDPR. 5 disulfide bridges follow: C34–C45, C40–C56, C44–C78, C66–C86, and C80–C104.

Belongs to the colipase family. In terms of assembly, forms a 1:1 stoichiometric complex with pancreatic lipase. Expressed by the pancreas.

Its subcellular location is the secreted. Functionally, colipase is a cofactor of pancreatic lipase. It allows the lipase to anchor itself to the lipid-water interface. Without colipase the enzyme is washed off by bile salts, which have an inhibitory effect on the lipase. Its function is as follows. Enterostatin has a biological activity as a satiety signal. This Myocastor coypus (Coypu) protein is Colipase (CLPS).